A 111-amino-acid chain; its full sequence is UPF0122 protein CKR_1296 (111 aa).

Belongs to the UPF0122 family.

In terms of biological role, might take part in the signal recognition particle (SRP) pathway. This is inferred from the conservation of its genetic proximity to ftsY/ffh. May be a regulatory protein. The chain is UPF0122 protein CKR_1296 from Clostridium kluyveri (strain NBRC 12016).